The primary structure comprises 200 residues: Small ribosomal subunit protein uS4 (200 aa).

Residues 22-42 (TGKELEKRPYAPGPHGPGQRK) form a disordered region. An S4 RNA-binding domain is found at 92–155 (ARLDNVVYKL…RNLSIIKESV (64 aa)).

This sequence belongs to the universal ribosomal protein uS4 family. As to quaternary structure, part of the 30S ribosomal subunit. Contacts protein S5. The interaction surface between S4 and S5 is involved in control of translational fidelity.

In terms of biological role, one of the primary rRNA binding proteins, it binds directly to 16S rRNA where it nucleates assembly of the body of the 30S subunit. With S5 and S12 plays an important role in translational accuracy. This Bacillus velezensis (strain DSM 23117 / BGSC 10A6 / LMG 26770 / FZB42) (Bacillus amyloliquefaciens subsp. plantarum) protein is Small ribosomal subunit protein uS4.